Here is a 141-residue protein sequence, read N- to C-terminus: Phosphoribosyl-AMP cyclohydrolase (141 aa).

Asp88 serves as a coordination point for Mg(2+). Zn(2+) is bound at residue Cys89. Positions 90 and 92 each coordinate Mg(2+). Zn(2+) is bound by residues Cys109 and Cys116.

It belongs to the PRA-CH family. Homodimer. Mg(2+) is required as a cofactor. It depends on Zn(2+) as a cofactor.

The protein resides in the cytoplasm. The enzyme catalyses 1-(5-phospho-beta-D-ribosyl)-5'-AMP + H2O = 1-(5-phospho-beta-D-ribosyl)-5-[(5-phospho-beta-D-ribosylamino)methylideneamino]imidazole-4-carboxamide. The protein operates within amino-acid biosynthesis; L-histidine biosynthesis; L-histidine from 5-phospho-alpha-D-ribose 1-diphosphate: step 3/9. In terms of biological role, catalyzes the hydrolysis of the adenine ring of phosphoribosyl-AMP. This is Phosphoribosyl-AMP cyclohydrolase from Paracidovorax citrulli (strain AAC00-1) (Acidovorax citrulli).